Consider the following 684-residue polypeptide: Probable potassium transport system protein Kup (684 aa).

12 helical membrane-spanning segments follow: residues 19–39 (ALLVTLGVVYGDIGTSPLYVM), 61–81 (VSLIFWTLLIITTVKYVLIAL), 104–124 (WLVLPAMVGGAALLADGMLTP), 151–171 (QVIWVTILIITFLFFIQRFGT), 177–197 (AFGPIMFVWFTFLGVAGFIAL), 223–243 (MGLFILGSIFLATTGAEALYS), 255–275 (LSWPYVNICLVLNYFGQAVWL), 303–323 (LGAIILATLAAIIASQALISG), 352–372 (LYIPVVNTILWLACLAIIGYF), 381–401 (AYGLAITITMLMTTLLLYQYL), 407–427 (PAVIAIGTLIFFSAIETVFFI), and 433–453 (FLHGGYVTAMIAFIILAVMYV).

Belongs to the HAK/KUP transporter (TC 2.A.72) family.

The protein localises to the cell membrane. The enzyme catalyses K(+)(in) + H(+)(in) = K(+)(out) + H(+)(out). Transport of potassium into the cell. Likely operates as a K(+):H(+) symporter. The protein is Probable potassium transport system protein Kup of Lacticaseibacillus casei (strain BL23) (Lactobacillus casei).